The following is a 150-amino-acid chain: UPF0098 protein TC_0109 (150 aa).

It belongs to the UPF0098 family.

In Chlamydia muridarum (strain MoPn / Nigg), this protein is UPF0098 protein TC_0109.